A 506-amino-acid polypeptide reads, in one-letter code: Methylthioalkylmalate synthase 1, chloroplastic (506 aa).

The transit peptide at 1–49 (MASSLLTSSVMIPTTGSTVVGRSVLPFQSSLHSLRLTHSYKNPALFISC) directs the protein to the chloroplast. The region spanning 85–359 (VRVFDTTLRD…YTKIDTRQIM (275 aa)) is the Pyruvate carboxyltransferase domain. Serine 98 is subject to Phosphoserine.

This sequence belongs to the alpha-IPM synthase/homocitrate synthase family. In terms of assembly, monomer. The cofactor is Mn(2+). As to expression, highly expressed in leaves, flowers, roots and siliques. Not detected in flowers in PubMed:12432038.

Its subcellular location is the plastid. The protein localises to the chloroplast. The enzyme catalyses an omega-(methylsulfanyl)-2-oxoalkanoate + acetyl-CoA + H2O = a 2-(omega-methylsulfanyl)alkylmalate + CoA + H(+). With respect to regulation, 1 mM DTT required for activity. Activated by ATP and inhibited by iodoacetamide. Determines the side chain length of aliphatic glucosinolate structures. Catalyzes exclusively the condensation reactions of both the first and second methionine carbon chain elongation. This chain is Methylthioalkylmalate synthase 1, chloroplastic (MAM1), found in Arabidopsis thaliana (Mouse-ear cress).